The chain runs to 134 residues: Small ribosomal subunit protein uS8c (134 aa).

Belongs to the universal ribosomal protein uS8 family. Part of the 30S ribosomal subunit.

It localises to the plastid. The protein localises to the chloroplast. One of the primary rRNA binding proteins, it binds directly to 16S rRNA central domain where it helps coordinate assembly of the platform of the 30S subunit. The chain is Small ribosomal subunit protein uS8c (rps8) from Lactuca sativa (Garden lettuce).